We begin with the raw amino-acid sequence, 275 residues long: Dermonecrotic toxin SpeSicTox-betaIIA3i (275 aa).

His5 is a catalytic residue. 2 residues coordinate Mg(2+): Glu25 and Asp27. The active-site Nucleophile is the His41. Disulfide bonds link Cys45–Cys51 and Cys47–Cys190. Asp85 serves as a coordination point for Mg(2+).

It belongs to the arthropod phospholipase D family. Class II subfamily. Requires Mg(2+) as cofactor. As to expression, expressed by the venom gland.

It localises to the secreted. The catalysed reaction is an N-(acyl)-sphingosylphosphocholine = an N-(acyl)-sphingosyl-1,3-cyclic phosphate + choline. It catalyses the reaction an N-(acyl)-sphingosylphosphoethanolamine = an N-(acyl)-sphingosyl-1,3-cyclic phosphate + ethanolamine. The enzyme catalyses a 1-acyl-sn-glycero-3-phosphocholine = a 1-acyl-sn-glycero-2,3-cyclic phosphate + choline. It carries out the reaction a 1-acyl-sn-glycero-3-phosphoethanolamine = a 1-acyl-sn-glycero-2,3-cyclic phosphate + ethanolamine. Its function is as follows. Dermonecrotic toxins cleave the phosphodiester linkage between the phosphate and headgroup of certain phospholipids (sphingolipid and lysolipid substrates), forming an alcohol (often choline) and a cyclic phosphate. This toxin acts on sphingomyelin (SM). It may also act on ceramide phosphoethanolamine (CPE), lysophosphatidylcholine (LPC) and lysophosphatidylethanolamine (LPE), but not on lysophosphatidylserine (LPS), and lysophosphatidylglycerol (LPG). It acts by transphosphatidylation, releasing exclusively cyclic phosphate products as second products. Induces dermonecrosis, hemolysis, increased vascular permeability, edema, inflammatory response, and platelet aggregation. In Sicarius peruensis (Six-eyed sand spider), this protein is Dermonecrotic toxin SpeSicTox-betaIIA3i.